Here is a 344-residue protein sequence, read N- to C-terminus: DNA-directed RNA polymerase subunit alpha (344 aa).

The segment at 1–239 (MADHWNKLTR…DQLQSFISFD (239 aa)) is alpha N-terminal domain (alpha-NTD). The alpha C-terminal domain (alpha-CTD) stretch occupies residues 254–344 (VLPYDHNLLR…ENLSKQYSED (91 aa)).

It belongs to the RNA polymerase alpha chain family. As to quaternary structure, homodimer. The RNAP catalytic core consists of 2 alpha, 1 beta, 1 beta' and 1 omega subunit. When a sigma factor is associated with the core the holoenzyme is formed, which can initiate transcription.

The catalysed reaction is RNA(n) + a ribonucleoside 5'-triphosphate = RNA(n+1) + diphosphate. Functionally, DNA-dependent RNA polymerase catalyzes the transcription of DNA into RNA using the four ribonucleoside triphosphates as substrates. The sequence is that of DNA-directed RNA polymerase subunit alpha from Anaplasma phagocytophilum (strain HZ).